The chain runs to 188 residues: dCTP deaminase (188 aa).

DCTP is bound by residues 111-116 (KSTYAR), 135-137 (TLE), glutamine 156, tyrosine 170, and glutamine 180. Glutamate 137 functions as the Proton donor/acceptor in the catalytic mechanism.

Belongs to the dCTP deaminase family. As to quaternary structure, homotrimer.

It catalyses the reaction dCTP + H2O + H(+) = dUTP + NH4(+). The protein operates within pyrimidine metabolism; dUMP biosynthesis; dUMP from dCTP (dUTP route): step 1/2. Functionally, catalyzes the deamination of dCTP to dUTP. The polypeptide is dCTP deaminase (Nitrosomonas eutropha (strain DSM 101675 / C91 / Nm57)).